Reading from the N-terminus, the 209-residue chain is MSVHEVNHPLVKHKIGLMREAGISTKKFRELTSEIASLLAYEASRDFQIEPRTITGWDGSKVGIQQLKGKKVTVVPILRAGIGMLDGVLDMIPNAKVSVVGLARNEETLEAHTYFERFVGNLDERLALIIDPMLATGGSMAATIEMLKNNGCLQIRVLCLVAAPEGLARITAAYPEIDIYVAAIDERLNEQGYILPGLGDAGDKIFGTK.

Residues R79, R104, and 131 to 139 (DPMLATGGS) contribute to the 5-phospho-alpha-D-ribose 1-diphosphate site. Residues I194 and 199-201 (GDA) contribute to the uracil site. D200 serves as a coordination point for 5-phospho-alpha-D-ribose 1-diphosphate.

Belongs to the UPRTase family. It depends on Mg(2+) as a cofactor.

The catalysed reaction is UMP + diphosphate = 5-phospho-alpha-D-ribose 1-diphosphate + uracil. It participates in pyrimidine metabolism; UMP biosynthesis via salvage pathway; UMP from uracil: step 1/1. Allosterically activated by GTP. Catalyzes the conversion of uracil and 5-phospho-alpha-D-ribose 1-diphosphate (PRPP) to UMP and diphosphate. The sequence is that of Uracil phosphoribosyltransferase from Geobacter sp. (strain M21).